Here is a 205-residue protein sequence, read N- to C-terminus: LexA repressor (205 aa).

Positions 29 to 49 (IRDICKATGLRSSSTVYNYLN) form a DNA-binding region, H-T-H motif. Active-site for autocatalytic cleavage activity residues include Ser-128 and Lys-165.

The protein belongs to the peptidase S24 family. As to quaternary structure, homodimer.

The catalysed reaction is Hydrolysis of Ala-|-Gly bond in repressor LexA.. Represses a number of genes involved in the response to DNA damage (SOS response), including recA and lexA. In the presence of single-stranded DNA, RecA interacts with LexA causing an autocatalytic cleavage which disrupts the DNA-binding part of LexA, leading to derepression of the SOS regulon and eventually DNA repair. This is LexA repressor from Moorella thermoacetica (strain ATCC 39073 / JCM 9320).